The following is a 158-amino-acid chain: Transcription elongation factor GreA (158 aa).

It belongs to the GreA/GreB family.

In terms of biological role, necessary for efficient RNA polymerase transcription elongation past template-encoded arresting sites. The arresting sites in DNA have the property of trapping a certain fraction of elongating RNA polymerases that pass through, resulting in locked ternary complexes. Cleavage of the nascent transcript by cleavage factors such as GreA or GreB allows the resumption of elongation from the new 3'terminus. GreA releases sequences of 2 to 3 nucleotides. In Salmonella typhi, this protein is Transcription elongation factor GreA.